A 1060-amino-acid chain; its full sequence is DNA-directed RNA polymerase subunit beta (1060 aa).

It belongs to the RNA polymerase beta chain family. As to quaternary structure, in plastids the minimal PEP RNA polymerase catalytic core is composed of four subunits: alpha, beta, beta', and beta''. When a (nuclear-encoded) sigma factor is associated with the core the holoenzyme is formed, which can initiate transcription.

Its subcellular location is the plastid. It localises to the chloroplast. The catalysed reaction is RNA(n) + a ribonucleoside 5'-triphosphate = RNA(n+1) + diphosphate. DNA-dependent RNA polymerase catalyzes the transcription of DNA into RNA using the four ribonucleoside triphosphates as substrates. In Lactuca sativa (Garden lettuce), this protein is DNA-directed RNA polymerase subunit beta.